A 142-amino-acid polypeptide reads, in one-letter code: Ovocleidin-17 (142 aa).

3 disulfides stabilise this stretch: Cys-5/Cys-16, Cys-33/Cys-138, and Cys-113/Cys-130. Residues Thr-12–Lys-139 enclose the C-type lectin domain. Residue Asn-59 is glycosylated (N-linked (GlcNAc...) asparagine). Phosphoserine occurs at positions 61 and 67.

In terms of tissue distribution, expressed in the shell gland mucosa. Not detected in hen liver, magnum, isthmus, cartilage, bone or in egg white or yolk.

The protein localises to the secreted. Its subcellular location is the extracellular space. It is found in the extracellular matrix. Its function is as follows. May form proteinaceous networks during the construction of the eggshell which then may control the deposition of the mineral phase. The chain is Ovocleidin-17 from Gallus gallus (Chicken).